The primary structure comprises 122 residues: Small ribosomal subunit protein uS13 (122 aa).

Residues 97-122 (PVRGQRTHTNARTRKGPAKAIAGKKK) form a disordered region.

Belongs to the universal ribosomal protein uS13 family. As to quaternary structure, part of the 30S ribosomal subunit. Forms a loose heterodimer with protein S19. Forms two bridges to the 50S subunit in the 70S ribosome.

Located at the top of the head of the 30S subunit, it contacts several helices of the 16S rRNA. In the 70S ribosome it contacts the 23S rRNA (bridge B1a) and protein L5 of the 50S subunit (bridge B1b), connecting the 2 subunits; these bridges are implicated in subunit movement. Contacts the tRNAs in the A and P-sites. This is Small ribosomal subunit protein uS13 from Bartonella tribocorum (strain CIP 105476 / IBS 506).